Here is a 309-residue protein sequence, read N- to C-terminus: Taste receptor type 2 member 31 (309 aa).

The Extracellular segment spans residues 1 to 2 (MT). The chain crosses the membrane as a helical span at residues 3–23 (TFIPIIFSSLVMVMFVTGNFA). Over 24 to 55 (NGFIALVNSIESVKRQKISYADQILTALAVSR) the chain is Cytoplasmic. Residues 56–76 (IGLLWVLLLNWYSTVLNPAFY) form a helical membrane-spanning segment. The Extracellular segment spans residues 77–100 (SVEVRTTAYNVWAVTGHFSNWLAT). A helical membrane pass occupies residues 101–121 (SLSIFYLLKIANFSNLIFLHL). The Cytoplasmic segment spans residues 122–126 (KRRVK). The helical transmembrane segment at 127–147 (SVILVMLLGPLLFLACQLFVI) threads the bilayer. Residues 148–181 (NMKEIVQTKEYEGNXTWKIKLRSAVYLSDATVTT) are Extracellular-facing. N-linked (GlcNAc...) asparagine glycosylation is present at asparagine 161. A helical membrane pass occupies residues 182–202 (LGNLVPFTLTLLCFLLLICSL). Residues 203-229 (CKHLKKMQLHGKGSQDPSMKVHIKALQ) lie on the Cytoplasmic side of the membrane. The helical transmembrane segment at 230 to 250 (TVTSFLLLCAIYFLSIMISVW) threads the bilayer. Residues 251–259 (SLGSLKNKP) are Extracellular-facing. A helical membrane pass occupies residues 260 to 280 (VFMFCKAMRFSYPSIHPFILI). Residues 281–309 (WGNKKLKQTFLSVLQQVRYWVKGEKPSSP) lie on the Cytoplasmic side of the membrane.

This sequence belongs to the G-protein coupled receptor T2R family.

The protein localises to the membrane. Its function is as follows. Receptor that may play a role in the perception of bitterness and is gustducin-linked. May play a role in sensing the chemical composition of the gastrointestinal content. The activity of this receptor may stimulate alpha gustducin, mediate PLC-beta-2 activation and lead to the gating of TRPM5. The protein is Taste receptor type 2 member 31 (TAS2R31) of Gorilla gorilla gorilla (Western lowland gorilla).